A 317-amino-acid chain; its full sequence is uncharacterized protein (317 aa).

This is an uncharacterized protein from Borreliella burgdorferi (strain ATCC 35210 / DSM 4680 / CIP 102532 / B31) (Borrelia burgdorferi).